The sequence spans 165 residues: Nucleotide-binding protein Suden_0039 (165 aa).

It belongs to the YajQ family.

Functionally, nucleotide-binding protein. The sequence is that of Nucleotide-binding protein Suden_0039 from Sulfurimonas denitrificans (strain ATCC 33889 / DSM 1251) (Thiomicrospira denitrificans (strain ATCC 33889 / DSM 1251)).